The primary structure comprises 392 residues: Methylthioribose-1-phosphate isomerase (392 aa).

The active-site Proton donor is D268.

It belongs to the eIF-2B alpha/beta/delta subunits family. MtnA subfamily.

Its subcellular location is the cytoplasm. The protein localises to the nucleus. It catalyses the reaction 5-(methylsulfanyl)-alpha-D-ribose 1-phosphate = 5-(methylsulfanyl)-D-ribulose 1-phosphate. It participates in amino-acid biosynthesis; L-methionine biosynthesis via salvage pathway; L-methionine from S-methyl-5-thio-alpha-D-ribose 1-phosphate: step 1/6. Catalyzes the interconversion of methylthioribose-1-phosphate (MTR-1-P) into methylthioribulose-1-phosphate (MTRu-1-P). The polypeptide is Methylthioribose-1-phosphate isomerase (Ajellomyces capsulatus (strain G186AR / H82 / ATCC MYA-2454 / RMSCC 2432) (Darling's disease fungus)).